We begin with the raw amino-acid sequence, 75 residues long: Protein SlyX homolog (75 aa).

The tract at residues 56–75 (KNMDSSNMEDPANEPPPPHY) is disordered.

Belongs to the SlyX family.

In Vibrio parahaemolyticus serotype O3:K6 (strain RIMD 2210633), this protein is Protein SlyX homolog.